The following is an 88-amino-acid chain: Large ribosomal subunit protein bL31B (88 aa).

Belongs to the bacterial ribosomal protein bL31 family. Type B subfamily. Part of the 50S ribosomal subunit.

This Bordetella bronchiseptica (strain ATCC BAA-588 / NCTC 13252 / RB50) (Alcaligenes bronchisepticus) protein is Large ribosomal subunit protein bL31B.